The following is a 921-amino-acid chain: Eukaryotic translation initiation factor 3 subunit A (921 aa).

The PCI domain occupies 319-493; that stretch reads FKFYASQLVL…GVVSFMEDPF (175 aa). Positions 497–524 are disordered; that stretch reads GGSTATNADDEQRNDDGYEETHVEEEPE. The span at 506–517 shows a compositional bias: basic and acidic residues; it reads DEQRNDDGYEET. Coiled coils occupy residues 562 to 647 and 693 to 868; these read ARNE…NEKT and ERMS…IKRN. Basic and acidic residues predominate over residues 818–865; sequence AAKEHDDRQRMLQDRLTKERKERERVNKEKDEAARKQREIEEAVERTI. A disordered region spans residues 818–921; it reads AAKEHDDRQR…KMKLRRAGRA (104 aa). Residues 873-890 are compositionally biased toward pro residues; sequence PAPPVRSAPPARAAPPPR. The span at 903 to 913 shows a compositional bias: basic and acidic residues; that stretch reads PEKKLTYAEKM.

Belongs to the eIF-3 subunit A family. Component of the eukaryotic translation initiation factor 3 (eIF-3) complex.

The protein localises to the cytoplasm. Its function is as follows. RNA-binding component of the eukaryotic translation initiation factor 3 (eIF-3) complex, which is involved in protein synthesis of a specialized repertoire of mRNAs and, together with other initiation factors, stimulates binding of mRNA and methionyl-tRNAi to the 40S ribosome. The eIF-3 complex specifically targets and initiates translation of a subset of mRNAs involved in cell proliferation. The polypeptide is Eukaryotic translation initiation factor 3 subunit A (Eremothecium gossypii (strain ATCC 10895 / CBS 109.51 / FGSC 9923 / NRRL Y-1056) (Yeast)).